A 351-amino-acid polypeptide reads, in one-letter code: Phosphate acyltransferase (351 aa).

It belongs to the PlsX family. As to quaternary structure, homodimer. Probably interacts with PlsY.

It localises to the cytoplasm. It carries out the reaction a fatty acyl-[ACP] + phosphate = an acyl phosphate + holo-[ACP]. It participates in lipid metabolism; phospholipid metabolism. Its function is as follows. Catalyzes the reversible formation of acyl-phosphate (acyl-PO(4)) from acyl-[acyl-carrier-protein] (acyl-ACP). This enzyme utilizes acyl-ACP as fatty acyl donor, but not acyl-CoA. This Gloeothece citriformis (strain PCC 7424) (Cyanothece sp. (strain PCC 7424)) protein is Phosphate acyltransferase.